The chain runs to 223 residues: Imidazoleglycerol-phosphate dehydratase (223 aa).

This sequence belongs to the imidazoleglycerol-phosphate dehydratase family.

The catalysed reaction is D-erythro-1-(imidazol-4-yl)glycerol 3-phosphate = 3-(imidazol-4-yl)-2-oxopropyl phosphate + H2O. The protein operates within amino-acid biosynthesis; L-histidine biosynthesis; L-histidine from 5-phospho-alpha-D-ribose 1-diphosphate: step 6/9. This Candida albicans (Yeast) protein is Imidazoleglycerol-phosphate dehydratase (HIS3).